Here is a 510-residue protein sequence, read N- to C-terminus: Guanosine import ATP-binding protein NupO (510 aa).

2 consecutive ABC transporter domains span residues 5 to 240 and 257 to 501; these read IEML…VGRE and LAID…AGST. 37–44 provides a ligand contact to ATP; sequence GENGAGKS.

It belongs to the ABC transporter superfamily. In terms of assembly, the complex is composed of two ATP-binding proteins (NupO), two transmembrane proteins (NupP and NupQ) and a solute-binding protein (NupN).

Its subcellular location is the cell membrane. In terms of biological role, part of an ABC transporter complex involved in the uptake of guanosine. Responsible for energy coupling to the transport system. May be a nucleoside transporter of broad specificity but with various affinities for different substrates. This chain is Guanosine import ATP-binding protein NupO, found in Bacillus subtilis (strain 168).